The primary structure comprises 261 residues: UPF0246 protein Daci_5283 (261 aa).

Belongs to the UPF0246 family.

The polypeptide is UPF0246 protein Daci_5283 (Delftia acidovorans (strain DSM 14801 / SPH-1)).